The following is a 132-amino-acid chain: Telomere bouquet protein 1 (132 aa).

In terms of assembly, interacts with bqt2 and sad1. The bqt1-bqt2-sad1 complex binds rap1.

Its subcellular location is the cytoplasm. The protein resides in the cytoskeleton. It is found in the microtubule organizing center. The protein localises to the spindle pole body. It localises to the chromosome. Its subcellular location is the telomere. In terms of biological role, involved in chromosome segregation. During meiotic prophase, connects telomeres to the spindle pole body by forming a bridge between the telomere protein rap1 and the spindle pole body protein sad1. The chain is Telomere bouquet protein 1 (bqt1) from Schizosaccharomyces pombe (strain 972 / ATCC 24843) (Fission yeast).